The sequence spans 620 residues: Toxin coregulated pilus biosynthesis protein I (620 aa).

Residues Thr344–Arg580 enclose the Methyl-accepting transducer domain.

This sequence belongs to the methyl-accepting chemotaxis (MCP) protein family.

It is found in the cell inner membrane. May function as an environmental regulator of TCP biogenesis. Negatively regulates the synthesis of the major pilin subunit of TCP (TcpA). In Vibrio cholerae serotype O1 (strain ATCC 39541 / Classical Ogawa 395 / O395), this protein is Toxin coregulated pilus biosynthesis protein I (tcpI).